Reading from the N-terminus, the 596-residue chain is Chitooligosaccharidolytic beta-N-acetylglucosaminidase (596 aa).

Residues 1–23 (MWLQAICIYTVFIIIGCGIPTAA) form the signal peptide. Residues asparagine 166, asparagine 264, and asparagine 377 are each glycosylated (N-linked (GlcNAc...) asparagine).

Belongs to the glycosyl hydrolase 20 family.

It catalyses the reaction Hydrolysis of terminal non-reducing N-acetyl-D-hexosamine residues in N-acetyl-beta-D-hexosaminides.. Functionally, active during metamorphosis to degrade chitin. The protein is Chitooligosaccharidolytic beta-N-acetylglucosaminidase of Bombyx mori (Silk moth).